A 310-amino-acid polypeptide reads, in one-letter code: Olfactory receptor 5W2 (310 aa).

At 1–25 (MDWENCSSLTDFFLLGITNNPEMKV) the chain is on the extracellular side. An N-linked (GlcNAc...) asparagine glycan is attached at Asn-5. Residues 26–46 (TLFAVFLAVYIINFSANLGMI) traverse the membrane as a helical segment. Over 47–54 (VLIRMDYQ) the chain is Cytoplasmic. Residues 55–75 (LHTPMYFFLSHLSFCDLCYST) form a helical membrane-spanning segment. Residues 76–99 (ATGPKMLVDLLAKNKSIPFYGCAL) are Extracellular-facing. A helical transmembrane segment spans residues 100–120 (QFLVFCIFADSECLLLSVMAF). At 121 to 139 (DRYKAIINPLLYTVNMSSR) the chain is on the cytoplasmic side. A helical transmembrane segment spans residues 140-160 (VCYLLLTGVYLVGIADALIHM). Over 161 to 196 (TLAFRLCFCGSNEINHFFCDIPPLLLLSRSDTQVNE) the chain is Extracellular. The chain crosses the membrane as a helical span at residues 197-217 (LVLFTVFGFIELSTISGVFIS). Residues 218–237 (YCYIILSVLEIHSAEGRFKA) lie on the Cytoplasmic side of the membrane. A helical membrane pass occupies residues 238–258 (LSTCTSHLSAVAIFQGTLLFM). The Extracellular segment spans residues 259-271 (YFRPSSSYSLDQD). A helical transmembrane segment spans residues 272–292 (KMTSLFYTLVVPMLNPLIYSL). Topologically, residues 293-310 (RNKDVKEALKKLKNKILF) are cytoplasmic.

The protein belongs to the G-protein coupled receptor 1 family.

It localises to the cell membrane. In terms of biological role, odorant receptor. This is Olfactory receptor 5W2 (OR5W2) from Homo sapiens (Human).